Here is a 185-residue protein sequence, read N- to C-terminus: Ribosome-recycling factor (185 aa).

It belongs to the RRF family.

It localises to the cytoplasm. Its function is as follows. Responsible for the release of ribosomes from messenger RNA at the termination of protein biosynthesis. May increase the efficiency of translation by recycling ribosomes from one round of translation to another. This chain is Ribosome-recycling factor, found in Serratia proteamaculans (strain 568).